We begin with the raw amino-acid sequence, 192 residues long: Pyridoxal 5'-phosphate synthase subunit PdxT (192 aa).

47–49 (GES) contacts L-glutamine. Cys-79 serves as the catalytic Nucleophile. Residues Arg-106 and 134–135 (IR) contribute to the L-glutamine site. Residues His-170 and Glu-172 each act as charge relay system in the active site.

This sequence belongs to the glutaminase PdxT/SNO family. As to quaternary structure, in the presence of PdxS, forms a dodecamer of heterodimers. Only shows activity in the heterodimer.

The catalysed reaction is aldehydo-D-ribose 5-phosphate + D-glyceraldehyde 3-phosphate + L-glutamine = pyridoxal 5'-phosphate + L-glutamate + phosphate + 3 H2O + H(+). It carries out the reaction L-glutamine + H2O = L-glutamate + NH4(+). It participates in cofactor biosynthesis; pyridoxal 5'-phosphate biosynthesis. Its function is as follows. Catalyzes the hydrolysis of glutamine to glutamate and ammonia as part of the biosynthesis of pyridoxal 5'-phosphate. The resulting ammonia molecule is channeled to the active site of PdxS. This chain is Pyridoxal 5'-phosphate synthase subunit PdxT, found in Geobacillus sp. (strain WCH70).